The primary structure comprises 731 residues: 1,4-alpha-glucan branching enzyme GlgB 2 (731 aa).

The Nucleophile role is filled by aspartate 410. Glutamate 463 (proton donor) is an active-site residue.

The protein belongs to the glycosyl hydrolase 13 family. GlgB subfamily. In terms of assembly, monomer.

It carries out the reaction Transfers a segment of a (1-&gt;4)-alpha-D-glucan chain to a primary hydroxy group in a similar glucan chain.. The protein operates within glycan biosynthesis; glycogen biosynthesis. Its function is as follows. Catalyzes the formation of the alpha-1,6-glucosidic linkages in glycogen by scission of a 1,4-alpha-linked oligosaccharide from growing alpha-1,4-glucan chains and the subsequent attachment of the oligosaccharide to the alpha-1,6 position. This Xanthomonas oryzae pv. oryzae (strain MAFF 311018) protein is 1,4-alpha-glucan branching enzyme GlgB 2.